The primary structure comprises 400 residues: E3 ubiquitin-protein ligase RNF149 (400 aa).

Residues 1–32 (MAWRRREASVGARGVLALALLALALCVPGARG) form the signal peptide. N-linked (GlcNAc...) asparagine glycosylation is found at Asn-52 and Asn-145. In terms of domain architecture, PA spans 67 to 175 (SSPKEGAHGL…PKGREILELV (109 aa)). Residues 201–221 (VVFVAIAFITMMIISLAWLIF) traverse the membrane as a helical segment. An RING-type; atypical zinc finger spans residues 269 to 310 (CAVCIENFKVKDIIRILPCKHIFHRICIDPWLLDHRTCPMCK). The interval 325–400 (DVQEMPAPES…SDSRHGGPIS (76 aa)) is disordered. Ser-345 is modified (phosphoserine). Residues 356-368 (DSSPPSASPAESE) show a composition bias toward low complexity. The segment covering 389-400 (GRSDSRHGGPIS) has biased composition (basic and acidic residues).

The protein localises to the membrane. The enzyme catalyses S-ubiquitinyl-[E2 ubiquitin-conjugating enzyme]-L-cysteine + [acceptor protein]-L-lysine = [E2 ubiquitin-conjugating enzyme]-L-cysteine + N(6)-ubiquitinyl-[acceptor protein]-L-lysine.. It participates in protein modification; protein ubiquitination. In terms of biological role, E3 ubiquitin-protein ligase. Ubiquitinates BRAF, inducing its proteasomal degradation. This Homo sapiens (Human) protein is E3 ubiquitin-protein ligase RNF149 (RNF149).